The sequence spans 342 residues: L-threonine 3-dehydrogenase (342 aa).

Zn(2+) is bound at residue C38. Catalysis depends on charge relay system residues T40 and H43. Zn(2+)-binding residues include H63, E64, C93, C96, C99, and C107. Residues I175, D195, R200, 262–264 (LGL), and 286–287 (IY) contribute to the NAD(+) site.

Belongs to the zinc-containing alcohol dehydrogenase family. Homotetramer. Zn(2+) serves as cofactor.

It is found in the cytoplasm. It catalyses the reaction L-threonine + NAD(+) = (2S)-2-amino-3-oxobutanoate + NADH + H(+). Its pathway is amino-acid degradation; L-threonine degradation via oxydo-reductase pathway; glycine from L-threonine: step 1/2. Its function is as follows. Catalyzes the NAD(+)-dependent oxidation of L-threonine to 2-amino-3-ketobutyrate. The polypeptide is L-threonine 3-dehydrogenase (Streptomyces avermitilis (strain ATCC 31267 / DSM 46492 / JCM 5070 / NBRC 14893 / NCIMB 12804 / NRRL 8165 / MA-4680)).